A 295-amino-acid polypeptide reads, in one-letter code: Foldase protein PrsA (295 aa).

Positions 1–19 (MKKVLIGFASIAMAFTLAA) are cleaved as a signal peptide. Residue C20 is the site of N-palmitoyl cysteine attachment. C20 carries S-diacylglycerol cysteine lipidation. The PpiC domain maps to 136–229 (EPKVTVAQIL…YGYQVIKMIN (94 aa)).

The protein belongs to the PrsA family.

It is found in the cell membrane. The enzyme catalyses [protein]-peptidylproline (omega=180) = [protein]-peptidylproline (omega=0). Functionally, plays a major role in protein secretion by helping the post-translocational extracellular folding of several secreted proteins. The protein is Foldase protein PrsA of Pediococcus pentosaceus (strain ATCC 25745 / CCUG 21536 / LMG 10740 / 183-1w).